The primary structure comprises 423 residues: Mannan endo-1,4-beta-mannosidase (423 aa).

An N-terminal signal peptide occupies residues Met-1–Gly-27. One can recognise a GH26 domain in the interval Met-56–Arg-409. Glu-121, His-143, and Trp-162 together coordinate substrate. Catalysis depends on Glu-212, which acts as the Proton donor. Residues Trp-217 and Tyr-285 each coordinate substrate. Glu-320 (nucleophile) is an active-site residue. Substrate is bound by residues Trp-360–Arg-361 and His-377.

It belongs to the glycosyl hydrolase 26 family. Homodimer.

It carries out the reaction Random hydrolysis of (1-&gt;4)-beta-D-mannosidic linkages in mannans, galactomannans and glucomannans.. In terms of biological role, catalyzes the endo hydrolysis of beta-1,4-linked mannan and galactomannan, but displays little activity towards other polysaccharides located in the plant cell wall. Preferentially hydrolyzes the larger oligosaccharides and has greater activity against non-substituted polysaccharides. It displays tight specificity for mannose at both the -2 and the -1 subsites. Appears to act in synergy with alpha-galactosidase (AgaA) to elicit hydrolysis of galactomannan. In Cellvibrio japonicus (strain Ueda107) (Pseudomonas fluorescens subsp. cellulosa), this protein is Mannan endo-1,4-beta-mannosidase.